We begin with the raw amino-acid sequence, 841 residues long: DNA ligase (841 aa).

NAD(+)-binding positions include 54-58 (DAEYD), 103-104 (SL), and Glu143. Lys145 acts as the N6-AMP-lysine intermediate in catalysis. Arg166, Glu203, Lys321, and Lys345 together coordinate NAD(+). Positions 471, 474, 489, and 495 each coordinate Zn(2+). A disordered region spans residues 554-575 (KTVAESDQMPSEGSSVGASGKH). The segment covering 561-570 (QMPSEGSSVG) has biased composition (polar residues). A BRCT domain is found at 764-841 (GINKAVAGKT…SEAELLTLLG (78 aa)).

Belongs to the NAD-dependent DNA ligase family. LigA subfamily. Requires Mg(2+) as cofactor. Mn(2+) serves as cofactor.

The catalysed reaction is NAD(+) + (deoxyribonucleotide)n-3'-hydroxyl + 5'-phospho-(deoxyribonucleotide)m = (deoxyribonucleotide)n+m + AMP + beta-nicotinamide D-nucleotide.. In terms of biological role, DNA ligase that catalyzes the formation of phosphodiester linkages between 5'-phosphoryl and 3'-hydroxyl groups in double-stranded DNA using NAD as a coenzyme and as the energy source for the reaction. It is essential for DNA replication and repair of damaged DNA. In Neisseria meningitidis serogroup C (strain 053442), this protein is DNA ligase.